Consider the following 517-residue polypeptide: Acyltransferase AFT15-1 (517 aa).

Histidine 180 serves as the catalytic Proton acceptor.

This sequence belongs to the plant acyltransferase family.

The protein operates within mycotoxin biosynthesis. Acyltransferase; part of the gene clusters that mediate the biosynthesis of the host-selective toxins (HSTs) AF-toxins responsible for Alternaria black spot of strawberry disease by the strawberry pathotype. AF-toxin I and III are valine derivatives of 2,3-dyhydroxy-isovaleric acid and 2-hydroxy-isovaleric acid respectively, while AF II is an isoleucine derivative of 2-hydroxy-valeric acid. These derivatives are bound to a 9,10-epoxy-8-hydroxy-9-methyl-decatrienoic acid (EDA) moiety. On cellular level, AF-toxins affect plasma membrane of susceptible cells and cause a sudden increase in loss of K(+) after a few minutes of toxin treatment. The aldo-keto reductase AFTS1 catalyzes the conversion of 2-keto-isovaleric acid (2-KIV) to 2-hydroxy-isovaleric acid (2-HIV) by reduction of its ketone to an alcohol. The acyl-CoA ligase AFT1, the hydrolase AFT2 and the enoyl-CoA hydratases AFT3 and AFT6, but also the polyketide synthase AFT9, the acyl-CoA dehydrogenase AFT10, the cytochrome P450 monooxygenase AFT11 and the oxidoreductase AFT12 are all involved in the biosynthesis of the AK-, AF- and ACT-toxin common EDA structural moiety. The exact function of each enzyme, and of additional enzymes identified within the AF-toxin clusters have still to be determined. The protein is Acyltransferase AFT15-1 (AFT15-1) of Alternaria alternata (Alternaria rot fungus).